The primary structure comprises 254 residues: tRNA (guanine-N(1)-)-methyltransferase (254 aa).

S-adenosyl-L-methionine-binding positions include Gly-112 and 131-136 (IGDYIL).

It belongs to the RNA methyltransferase TrmD family. As to quaternary structure, homodimer.

The protein resides in the cytoplasm. The enzyme catalyses guanosine(37) in tRNA + S-adenosyl-L-methionine = N(1)-methylguanosine(37) in tRNA + S-adenosyl-L-homocysteine + H(+). Its function is as follows. Specifically methylates guanosine-37 in various tRNAs. This chain is tRNA (guanine-N(1)-)-methyltransferase, found in Sulfurihydrogenibium sp. (strain YO3AOP1).